The primary structure comprises 396 residues: Squamosa promoter-binding-like protein 10 (396 aa).

Residues 74–104 are disordered; it reads QSTSINSSSPEDKRCNLASQSSPGDSSSNID. The span at 90 to 104 shows a compositional bias: polar residues; that stretch reads LASQSSPGDSSSNID. The SBP-type zinc-finger motif lies at 173–250; that stretch reads VPRCQIDGCE…SHHNARRRKP (78 aa). Zn(2+) is bound by residues C176, C181, C198, H201, C217, C220, H224, and C236. Positions 233 to 249 match the Bipartite nuclear localization signal motif; it reads KRSCRKRLSHHNARRRK.

Requires Zn(2+) as cofactor.

The protein resides in the nucleus. In terms of biological role, trans-acting factor that binds specifically to the consensus nucleotide sequence 5'-TNCGTACAA-3'. The protein is Squamosa promoter-binding-like protein 10 (SPL10) of Arabidopsis thaliana (Mouse-ear cress).